A 141-amino-acid chain; its full sequence is Hemoglobin subunit alpha-1/2 (141 aa).

Residues 1–141 form the Globin domain; sequence VLSPADKANV…VGTVLTSKYR (141 aa). Ser3 is subject to Phosphoserine. An N6-succinyllysine mark is found at Lys7 and Lys11. Lys16 carries the post-translational modification N6-acetyllysine; alternate. Residue Lys16 is modified to N6-succinyllysine; alternate. Phosphotyrosine is present on Tyr24. Phosphoserine is present on Ser35. N6-succinyllysine is present on Lys40. The residue at position 49 (Ser49) is a Phosphoserine. Position 58 (His58) interacts with O2. His87 contributes to the heme b binding site. Ser102 carries the post-translational modification Phosphoserine. Position 108 is a phosphothreonine (Thr108). A phosphoserine mark is found at Ser124 and Ser131. A phosphothreonine mark is found at Thr134 and Thr137. At Ser138 the chain carries Phosphoserine.

The protein belongs to the globin family. Heterotetramer of two alpha chains and two beta chains. Red blood cells.

Functionally, involved in oxygen transport from the lung to the various peripheral tissues. The polypeptide is Hemoglobin subunit alpha-1/2 (Macroderma gigas (Australian ghost bat)).